The following is a 327-amino-acid chain: Gamma-resorcylate decarboxylase (327 aa).

Zn(2+) contacts are provided by glutamate 8 and histidine 10. 2,6-dihydroxybenzoate contacts are provided by phenylalanine 23, histidine 164, and aspartate 287. Residues histidine 164 and aspartate 287 each coordinate Zn(2+). The active site involves aspartate 287.

Belongs to the metallo-dependent hydrolases superfamily. ACMSD family. In terms of assembly, homotetramer. Dimer of dimers. Requires Zn(2+) as cofactor.

The enzyme catalyses 2,6-dihydroxybenzoate + H(+) = resorcinol + CO2. The catalysed reaction is 2,3-dihydroxybenzoate + H(+) = catechol + CO2. It participates in aromatic compound metabolism. With respect to regulation, inhibited by CuCl(2), monoiodoacetate and diethylpyrocarbonate. Inhibited by 2,3-dihydroxybenzaldehyde, which is an analog of the substrate 2,3-dihydroxybenzoate. In terms of biological role, involved in the gamma-resorcylate (2,6-dihydroxybenzoate) catabolism. Catalyzes the reversible decarboxylation of gamma-resorcylate to resorcinol. The reaction is reversible, but equilibrium greatly favors the decarboxylation reaction. Also catalyzes the decarboxylation of 2,3-dihydroxybenzoate to catechol, but does not act on 2,4-dihydroxybenzoate, 2,5-dihydroxybenzoate, 3,4-dihydroxybenzoate, 3,5-dihydroxybenzoate, 2-hydroxybenzoate, or 3-hydroxybenzoate. Only resorcinol is carboxylated by the reverse reaction. The protein is Gamma-resorcylate decarboxylase of Rhizobium sp. (strain MTP-10005).